We begin with the raw amino-acid sequence, 483 residues long: ATP-dependent RNA helicase dbp-5 (483 aa).

Positions 1 to 47 are disordered; that stretch reads MADLASRITKPDEAPAAAPEAAPVSAPASEEPKAPENETSIEESQSN. The segment covering 14–29 has biased composition (low complexity); it reads APAAAPEAAPVSAPAS. A Q motif motif is present at residues 74–102; it reads SSFDELGLPEAVNRGLLAINFKKPSKVQE. In terms of domain architecture, Helicase ATP-binding spans 107-276; that stretch reads LMLSDPPRNM…ERFAPNANQM (170 aa). ATP is bound at residue 120 to 127; that stretch reads SQSGTGKT. Residues 223-226 carry the DEAD box motif; the sequence is DEAD. One can recognise a Helicase C-terminal domain in the interval 304–455; sequence ILCKLYGLMT…LIQLNPNDLD (152 aa).

Belongs to the DEAD box helicase family. DDX19/DBP5 subfamily. In terms of assembly, associates with the nuclear pore complex.

It is found in the cytoplasm. It localises to the nucleus. Its subcellular location is the nuclear pore complex. The protein localises to the nucleus membrane. It catalyses the reaction ATP + H2O = ADP + phosphate + H(+). ATP-dependent RNA helicase associated with the nuclear pore complex and essential for mRNA export from the nucleus. May participate in a terminal step of mRNA export through the removal of proteins that accompany mRNA through the nucleopore complex. May also be involved in early transcription. The chain is ATP-dependent RNA helicase dbp-5 (dbp-5) from Neurospora crassa (strain ATCC 24698 / 74-OR23-1A / CBS 708.71 / DSM 1257 / FGSC 987).